The chain runs to 138 residues: Centromere protein S (138 aa).

Met1 is modified (N-acetylmethionine). Positions Arg110–Asn138 are disordered.

The protein belongs to the TAF9 family. CENP-S/MHF1 subfamily. Heterodimer with CENPX, sometimes called MHF; this interaction stabilizes both partners. MHF heterodimers can assemble to form tetrameric structures. MHF also coassemble with CENPT-CENPW heterodimers at centromeres to form the tetrameric CENP-T-W-S-X complex. Forms a discrete complex with FANCM and CENPX, called FANCM-MHF; this interaction, probably mediated by direct binding between CENPS and FANCM, leads to synergistic activation of double-stranded DNA binding and strongly stimulates FANCM-mediated DNA remodeling. Recruited by FANCM to the Fanconi anemia (FA) core complex, which consists of CENPS, CENPX, FANCA, FANCB, FANCC, FANCE, FANCF, FANCG, FANCL, FANCM, FAAP24 and FAAP100. The FA core complex associates with Bloom syndrome (BLM) complex, which consists of at least BLM, DNA topoisomerase 3-alpha (TOP3A), RMI1/BLAP75, RPA1/RPA70 and RPA2/RPA32. The super complex between FA and BLM is called BRAFT. Component of the CENPA-CAD complex, composed of CENPI, CENPK, CENPL, CENPO, CENPP, CENPQ, CENPR and CENPS. The CENPA-CAD complex is probably recruited on centromeres by the CENPA-NAC complex, composed of at least CENPA, CENPC, CENPH, CENPM, CENPN, CENPT and CENPU. As to expression, ubiquitously expressed.

The protein localises to the nucleus. It localises to the chromosome. The protein resides in the centromere. Its subcellular location is the kinetochore. Functionally, DNA-binding component of the Fanconi anemia (FA) core complex. Required for the normal activation of the FA pathway, leading to monoubiquitination of the FANCI-FANCD2 complex in response to DNA damage, cellular resistance to DNA cross-linking drugs, and prevention of chromosomal breakage. In complex with CENPX (MHF heterodimer), crucial cofactor for FANCM in both binding and ATP-dependent remodeling of DNA. Stabilizes FANCM. In complex with CENPX and FANCM (but not other FANC proteins), rapidly recruited to blocked forks and promotes gene conversion at blocked replication forks. In complex with CENPT, CENPW and CENPX (CENP-T-W-S-X heterotetramer), involved in the formation of a functional kinetochore outer plate, which is essential for kinetochore-microtubule attachment and faithful mitotic progression. As a component of MHF and CENP-T-W-S-X complexes, binds DNA and bends it to form a nucleosome-like structure. DNA-binding function is fulfilled in the presence of CENPX, with the following preference for DNA substates: Holliday junction &gt; double-stranded &gt; splay arm &gt; single-stranded. Does not bind DNA on its own. This is Centromere protein S (CENPS) from Homo sapiens (Human).